The chain runs to 121 residues: Small ribosomal subunit protein uS13 (121 aa).

The disordered stretch occupies residues 93–121 (RGLPMRGQRTRTNARTRKGPRKSAAALKK).

This sequence belongs to the universal ribosomal protein uS13 family. As to quaternary structure, part of the 30S ribosomal subunit. Forms a loose heterodimer with protein S19. Forms two bridges to the 50S subunit in the 70S ribosome.

Its function is as follows. Located at the top of the head of the 30S subunit, it contacts several helices of the 16S rRNA. In the 70S ribosome it contacts the 23S rRNA (bridge B1a) and protein L5 of the 50S subunit (bridge B1b), connecting the 2 subunits; these bridges are implicated in subunit movement. Contacts the tRNAs in the A and P-sites. This is Small ribosomal subunit protein uS13 from Methylibium petroleiphilum (strain ATCC BAA-1232 / LMG 22953 / PM1).